The chain runs to 395 residues: Tubulin-like protein CetZ1 (395 aa).

Residues 10–14 (QAGGK), 110–112 (GTG), glutamate 142, asparagine 169, and asparagine 187 contribute to the GTP site.

The protein belongs to the CetZ family.

The protein localises to the cytoplasm. In terms of biological role, involved in cell shape control. Essential for the development of a rod-shaped cell type required for efficient swimming. The sequence is that of Tubulin-like protein CetZ1 from Haloferax volcanii (strain ATCC 29605 / DSM 3757 / JCM 8879 / NBRC 14742 / NCIMB 2012 / VKM B-1768 / DS2) (Halobacterium volcanii).